Reading from the N-terminus, the 284-residue chain is BES1/BZR1 homolog protein 3 (284 aa).

2 disordered regions span residues M1–R21 and G85–T116. Positions R6–S88 are required for DNA-binding. Polar residues predominate over residues G85 to H97. The span at S98 to S114 shows a compositional bias: low complexity. T153 is subject to Phosphothreonine.

Belongs to the BZR/LAT61 family. Phosphorylated. Phosphorylation increases protein degradation.

This Arabidopsis thaliana (Mouse-ear cress) protein is BES1/BZR1 homolog protein 3 (BEH3).